Consider the following 453-residue polypeptide: Bifunctional protein GlmU (453 aa).

The segment at 1–225 (MNIVILAAGT…EWETLGVNSK (225 aa)) is pyrophosphorylase. UDP-N-acetyl-alpha-D-glucosamine contacts are provided by residues 6–9 (LAAG), Lys-20, Gln-71, 76–77 (GT), 98–100 (YGD), Gly-135, Glu-150, Asn-165, and Asn-223. Residue Asp-100 participates in Mg(2+) binding. Asn-223 is a Mg(2+) binding site. Residues 226–246 (QQLAELERIHQRNVADDLLVA) are linker. The tract at residues 247 to 453 (GVTIADPARI…GYVRPTKKKS (207 aa)) is N-acetyltransferase. UDP-N-acetyl-alpha-D-glucosamine contacts are provided by Arg-329 and Lys-347. Residue His-359 is the Proton acceptor of the active site. Residues Tyr-362 and Asn-373 each coordinate UDP-N-acetyl-alpha-D-glucosamine. Residues Ala-376, 382 to 383 (NY), Ser-401, and Ala-419 contribute to the acetyl-CoA site.

In the N-terminal section; belongs to the N-acetylglucosamine-1-phosphate uridyltransferase family. The protein in the C-terminal section; belongs to the transferase hexapeptide repeat family. Homotrimer. It depends on Mg(2+) as a cofactor.

The protein resides in the cytoplasm. It catalyses the reaction alpha-D-glucosamine 1-phosphate + acetyl-CoA = N-acetyl-alpha-D-glucosamine 1-phosphate + CoA + H(+). The enzyme catalyses N-acetyl-alpha-D-glucosamine 1-phosphate + UTP + H(+) = UDP-N-acetyl-alpha-D-glucosamine + diphosphate. It participates in nucleotide-sugar biosynthesis; UDP-N-acetyl-alpha-D-glucosamine biosynthesis; N-acetyl-alpha-D-glucosamine 1-phosphate from alpha-D-glucosamine 6-phosphate (route II): step 2/2. The protein operates within nucleotide-sugar biosynthesis; UDP-N-acetyl-alpha-D-glucosamine biosynthesis; UDP-N-acetyl-alpha-D-glucosamine from N-acetyl-alpha-D-glucosamine 1-phosphate: step 1/1. Its pathway is bacterial outer membrane biogenesis; LPS lipid A biosynthesis. Functionally, catalyzes the last two sequential reactions in the de novo biosynthetic pathway for UDP-N-acetylglucosamine (UDP-GlcNAc). The C-terminal domain catalyzes the transfer of acetyl group from acetyl coenzyme A to glucosamine-1-phosphate (GlcN-1-P) to produce N-acetylglucosamine-1-phosphate (GlcNAc-1-P), which is converted into UDP-GlcNAc by the transfer of uridine 5-monophosphate (from uridine 5-triphosphate), a reaction catalyzed by the N-terminal domain. This Paraburkholderia phymatum (strain DSM 17167 / CIP 108236 / LMG 21445 / STM815) (Burkholderia phymatum) protein is Bifunctional protein GlmU.